The primary structure comprises 78 residues: ATP synthase subunit c (78 aa).

Helical transmembrane passes span 12–32 (IGAGLACTGMGGAAVGVGHVV) and 54–74 (FIGIAFAEALGIFSFLVALLL).

This sequence belongs to the ATPase C chain family. In terms of assembly, F-type ATPases have 2 components, F(1) - the catalytic core - and F(0) - the membrane proton channel. F(1) has five subunits: alpha(3), beta(3), gamma(1), delta(1), epsilon(1). F(0) has four main subunits: a(1), b(1), b'(1) and c(10-14). The alpha and beta chains form an alternating ring which encloses part of the gamma chain. F(1) is attached to F(0) by a central stalk formed by the gamma and epsilon chains, while a peripheral stalk is formed by the delta, b and b' chains.

The protein resides in the cellular chromatophore membrane. Its function is as follows. F(1)F(0) ATP synthase produces ATP from ADP in the presence of a proton or sodium gradient. F-type ATPases consist of two structural domains, F(1) containing the extramembraneous catalytic core and F(0) containing the membrane proton channel, linked together by a central stalk and a peripheral stalk. During catalysis, ATP synthesis in the catalytic domain of F(1) is coupled via a rotary mechanism of the central stalk subunits to proton translocation. Key component of the F(0) channel; it plays a direct role in translocation across the membrane. A homomeric c-ring of between 10-14 subunits forms the central stalk rotor element with the F(1) delta and epsilon subunits. The sequence is that of ATP synthase subunit c from Rhodobacter capsulatus (Rhodopseudomonas capsulata).